We begin with the raw amino-acid sequence, 347 residues long: Homeobox protein knotted-1-like 9 (347 aa).

Residues 1-17 show a composition bias toward low complexity; that stretch reads MESFASLAGGGSSSTTA. Disordered stretches follow at residues 1 to 36, 122 to 145, and 179 to 206; these read MESF…PPPL, QQLD…DVPD, and DSNC…DPSD. The span at 22–36 shows a compositional bias: pro residues; sequence LIPPENPDRISPPPL. Residues 188-203 are compositionally biased toward acidic residues; the sequence is SEEEQDTSCPEAEEID. Residues 208-228 enclose the ELK domain; it reads QLKHQLLMKYGGSLGDLRQAF. Residues 229 to 293 constitute a DNA-binding region (homeobox; TALE-type); sequence SKRTKKGKLP…NQRKRHWKPT (65 aa).

The protein belongs to the TALE/KNOX homeobox family.

The protein localises to the nucleus. The sequence is that of Homeobox protein knotted-1-like 9 from Oryza sativa subsp. japonica (Rice).